The chain runs to 510 residues: NAD(P)H-quinone oxidoreductase subunit 2 A, chloroplastic (510 aa).

The next 12 membrane-spanning stretches (helical) occupy residues 31 to 51, 59 to 79, 99 to 119, 124 to 144, 149 to 169, 183 to 203, 229 to 249, 295 to 315, 323 to 343, 354 to 374, 395 to 415, and 418 to 438; these read FIFPECILIFGLILLLMIDLT, WFYFISSTSLVISITALLFRW, IFQFLILLCSTLCIPLSVEYI, MAITEFLLFVLTATLGGMFLC, LITIFVAPECFSLCSYLLSGY, YLLMGGASSSILVHGFSWLYG, ISIALIFITVGLGFKLSPAPF, WHLLLEILAILSMILGNLLAI, MLAYSSIGQIGYVIIGIIVGD, YMLFYISMNLGTFACIVLFGL, ALSLALCLLSLGGLPPLAGFF, and LYLFWCGWQAGLYFLVSIGLL.

Belongs to the complex I subunit 2 family. NDH is composed of at least 16 different subunits, 5 of which are encoded in the nucleus.

It is found in the plastid. The protein localises to the chloroplast thylakoid membrane. The catalysed reaction is a plastoquinone + NADH + (n+1) H(+)(in) = a plastoquinol + NAD(+) + n H(+)(out). The enzyme catalyses a plastoquinone + NADPH + (n+1) H(+)(in) = a plastoquinol + NADP(+) + n H(+)(out). In terms of biological role, NDH shuttles electrons from NAD(P)H:plastoquinone, via FMN and iron-sulfur (Fe-S) centers, to quinones in the photosynthetic chain and possibly in a chloroplast respiratory chain. The immediate electron acceptor for the enzyme in this species is believed to be plastoquinone. Couples the redox reaction to proton translocation, and thus conserves the redox energy in a proton gradient. The protein is NAD(P)H-quinone oxidoreductase subunit 2 A, chloroplastic of Saccharum officinarum (Sugarcane).